Here is a 559-residue protein sequence, read N- to C-terminus: Complement component receptor 1-like protein (559 aa).

The N-terminal stretch at 1–35 (MEASSPLDPVGRLVAFCRGGVHLAVLLLFLSPSTL) is a signal peptide. 7 consecutive Sushi domains span residues 36-96 (GQCP…VCIR), 97-158 (KQCE…ICES), 159-229 (IPCE…QCIE), 231-290 (NKCT…SCFK), 292-354 (KSCG…VCEQ), 355-415 (VICK…KCVS), and 417-477 (VICK…KCVS). At 36 to 482 (GQCPAPPLFP…PKCVSRSNSG (447 aa)) the chain is on the extracellular side. Intrachain disulfides connect C38-C81, C68-C94, C99-C140, C126-C156, C161-C210, C190-C227, C233-C275, C261-C288, C294-C336, C322-C352, C357-C400, C386-C413, C419-C462, and C448-C475. O-linked (GalNAc...) threonine glycosylation is present at T53. An N-linked (GlcNAc...) asparagine glycan is attached at N331. A helical membrane pass occupies residues 483–503 (LIAGIFIGIIVLILFIIFSYW). Residues 504–559 (MIMKFKKRNSTNEKCKEVGIYLNSKEDSCVQPQSLLTSQENNSTSSPARNSLTQEV) are Cytoplasmic-facing. 3 positions are modified to phosphoserine: S527, S531, and S537. The disordered stretch occupies residues 535 to 559 (PQSLLTSQENNSTSSPARNSLTQEV). Phosphothreonine is present on T540. The residue at position 554 (S554) is a Phosphoserine.

Belongs to the receptors of complement activation (RCA) family. Interacts with C3b.

It localises to the membrane. In terms of biological role, acts as a cofactor for complement factor I, a serine protease which protects autologous cells against complement-mediated injury by cleaving C3b and C4b deposited on host tissue. Also acts as a decay-accelerating factor, preventing the formation of C4b2a and C3bBb, the amplification convertases of the complement cascade. Seems to act as a costimulatory factor for T-cells. May play a crucial role in early embryonic development by maintaining fetomaternal tolerance. This chain is Complement component receptor 1-like protein (Cr1l), found in Rattus norvegicus (Rat).